We begin with the raw amino-acid sequence, 317 residues long: Beta-ketoacyl-[acyl-carrier-protein] synthase III (317 aa).

Residues cysteine 112 and histidine 244 contribute to the active site. An ACP-binding region spans residues 245–249; it reads QANIR. Asparagine 274 is an active-site residue.

The protein belongs to the thiolase-like superfamily. FabH family. Homodimer.

It localises to the cytoplasm. The enzyme catalyses malonyl-[ACP] + acetyl-CoA + H(+) = 3-oxobutanoyl-[ACP] + CO2 + CoA. The protein operates within lipid metabolism; fatty acid biosynthesis. In terms of biological role, catalyzes the condensation reaction of fatty acid synthesis by the addition to an acyl acceptor of two carbons from malonyl-ACP. Catalyzes the first condensation reaction which initiates fatty acid synthesis and may therefore play a role in governing the total rate of fatty acid production. Possesses both acetoacetyl-ACP synthase and acetyl transacylase activities. Its substrate specificity determines the biosynthesis of branched-chain and/or straight-chain of fatty acids. This Rickettsia akari (strain Hartford) protein is Beta-ketoacyl-[acyl-carrier-protein] synthase III.